Reading from the N-terminus, the 554-residue chain is Phosphomethylpyrimidine synthase (554 aa).

Residues asparagine 191, methionine 220, tyrosine 249, histidine 285, 305-307, 346-349, and glutamate 385 each bind substrate; these read SRG and DGLR. Histidine 389 contacts Zn(2+). Tyrosine 412 provides a ligand contact to substrate. Residue histidine 453 participates in Zn(2+) binding. [4Fe-4S] cluster is bound by residues cysteine 533, cysteine 536, and cysteine 541.

This sequence belongs to the ThiC family. As to quaternary structure, homodimer. [4Fe-4S] cluster serves as cofactor.

The catalysed reaction is 5-amino-1-(5-phospho-beta-D-ribosyl)imidazole + S-adenosyl-L-methionine = 4-amino-2-methyl-5-(phosphooxymethyl)pyrimidine + CO + 5'-deoxyadenosine + formate + L-methionine + 3 H(+). The protein operates within cofactor biosynthesis; thiamine diphosphate biosynthesis. Catalyzes the synthesis of the hydroxymethylpyrimidine phosphate (HMP-P) moiety of thiamine from aminoimidazole ribotide (AIR) in a radical S-adenosyl-L-methionine (SAM)-dependent reaction. The chain is Phosphomethylpyrimidine synthase from Ehrlichia chaffeensis (strain ATCC CRL-10679 / Arkansas).